The primary structure comprises 203 residues: Transcriptional regulator GfcR 2 (203 aa).

Belongs to the purine/pyrimidine phosphoribosyltransferase family. GfcR subfamily.

The sequence is that of Transcriptional regulator GfcR 2 from Methanosarcina acetivorans (strain ATCC 35395 / DSM 2834 / JCM 12185 / C2A).